The sequence spans 510 residues: Probable cytosol aminopeptidase (510 aa).

Positions 268 and 273 each coordinate Mn(2+). The active site involves Lys280. Mn(2+) contacts are provided by Asp291, Asp350, and Glu352. The active site involves Arg354.

Belongs to the peptidase M17 family. It depends on Mn(2+) as a cofactor.

The protein resides in the cytoplasm. The enzyme catalyses Release of an N-terminal amino acid, Xaa-|-Yaa-, in which Xaa is preferably Leu, but may be other amino acids including Pro although not Arg or Lys, and Yaa may be Pro. Amino acid amides and methyl esters are also readily hydrolyzed, but rates on arylamides are exceedingly low.. It catalyses the reaction Release of an N-terminal amino acid, preferentially leucine, but not glutamic or aspartic acids.. In terms of biological role, presumably involved in the processing and regular turnover of intracellular proteins. Catalyzes the removal of unsubstituted N-terminal amino acids from various peptides. This chain is Probable cytosol aminopeptidase, found in Micrococcus luteus (strain ATCC 4698 / DSM 20030 / JCM 1464 / CCM 169 / CCUG 5858 / IAM 1056 / NBRC 3333 / NCIMB 9278 / NCTC 2665 / VKM Ac-2230) (Micrococcus lysodeikticus).